A 344-amino-acid polypeptide reads, in one-letter code: Meiotic recombination protein DMC1 homolog B (344 aa).

Residue 133 to 140 (GEFRSGKT) participates in ATP binding. Arginine 235 lines the dsDNA pocket. Arginine 235, phenylalanine 238, arginine 241, arginine 247, and arginine 315 together coordinate ssDNA. DsDNA-binding residues include arginine 241 and arginine 247.

It belongs to the RecA family. DMC1 subfamily. Highly expressed in spikelets. Expressed in meiotic young panicles.

It localises to the nucleus. In terms of biological role, recombinase that may participate in meiotic recombination, specifically in homologous strand assimilation, which is required for the resolution of meiotic double-strand breaks. Exhibits DNA-dependent ATPase activity when bound to single-stranded DNA (ssDNA). Mediates renaturation of homologous complementary strands as well as assimilation of single strands into homologous supercoiled duplexes leading to D-loop formation. Binds circular single-stranded DNA (ssDNA) and circular double-stranded DNA (dsDNA) in vitro. Catalyzes DNA homologous renaturation and DNA strand exchange. The rates of these activities are dependent on the state of ATP hydrolysis. Forms helical filaments along ssDNA and dsDNA, and promotes strand exchange between ssDNA and dsDNA with long DNA substrates of several thousand base pairs. The presence of the replication protein A is not required for this activity. Seems to be required for homologous pairing and subsequent chromosome segregation during male meiosis. May be not directly required for homologous pairing during male meiosis. Required for synaptonemal complex assembly and crossover formation. Functions redundantly with DMC1A. The polypeptide is Meiotic recombination protein DMC1 homolog B (Oryza sativa subsp. japonica (Rice)).